Reading from the N-terminus, the 171-residue chain is Peptide deformylase (171 aa).

Residues Cys91 and His133 each contribute to the Fe cation site. Residue Glu134 is part of the active site. His137 contributes to the Fe cation binding site.

Belongs to the polypeptide deformylase family. The cofactor is Fe(2+).

The catalysed reaction is N-terminal N-formyl-L-methionyl-[peptide] + H2O = N-terminal L-methionyl-[peptide] + formate. Functionally, removes the formyl group from the N-terminal Met of newly synthesized proteins. Requires at least a dipeptide for an efficient rate of reaction. N-terminal L-methionine is a prerequisite for activity but the enzyme has broad specificity at other positions. The protein is Peptide deformylase of Mannheimia succiniciproducens (strain KCTC 0769BP / MBEL55E).